The following is a 255-amino-acid chain: Triosephosphate isomerase (255 aa).

9 to 11 (NWK) contributes to the substrate binding site. H95 (electrophile) is an active-site residue. Residue E167 is the Proton acceptor of the active site. Residues G173, S212, and 233–234 (GG) contribute to the substrate site.

It belongs to the triosephosphate isomerase family. Homodimer.

It is found in the cytoplasm. It catalyses the reaction D-glyceraldehyde 3-phosphate = dihydroxyacetone phosphate. It functions in the pathway carbohydrate biosynthesis; gluconeogenesis. Its pathway is carbohydrate degradation; glycolysis; D-glyceraldehyde 3-phosphate from glycerone phosphate: step 1/1. Its function is as follows. Involved in the gluconeogenesis. Catalyzes stereospecifically the conversion of dihydroxyacetone phosphate (DHAP) to D-glyceraldehyde-3-phosphate (G3P). This Salmonella dublin (strain CT_02021853) protein is Triosephosphate isomerase.